A 160-amino-acid polypeptide reads, in one-letter code: MNKVAQYYRELVASLSERLRNGERDIDALVEQARERVIKTGELTRTEVDELTRAVRRDLEEFAMSYEESLKEESDSVFMRVIKESLWQELADITDKTQLEWREVFQDLNHHGVYHSGEVVGLGNLVCEKCHFHLPIYTPEVLTLCPKCGHDQFQRRPFEP.

This is an uncharacterized protein from Escherichia coli O157:H7.